The primary structure comprises 584 residues: DNA damage-binding protein 2 (584 aa).

Positions 1 to 87 are disordered; sequence MGPTTRARFV…PVAAAARSGR (87 aa). Positions 8 to 20 are enriched in basic residues; it reads RFVHNRRRRRRRG. 2 stretches are compositionally biased toward acidic residues: residues 25–35 and 45–66; these read PDDDDEEEDQQ and DEGEEDAEEEGSGEVDDDDGEA. The segment at 122–140 adopts a CCHC-type zinc-finger fold; sequence KPCFLCKMPGGHTTLTCPH. WD repeat units follow at residues 192-232, 236-278, 288-327, 333-373, 378-418, 438-481, and 484-523; these read FHQR…EKIT, VHSC…SLLN, STWRMIYGMDFNSDKGLLLVADSFGFLHLLDRRLKARIGD, KKGS…PNSA, AHGR…LESP, EWDP…LAEV, and PDITTISPVNKLHPRDDILASGSSRSIFIWKPKTESDATE. A DWD box motif is present at residues 351 to 366; the sequence is LLSSGNDHYARIWDTR. Over residues 517–532 the composition is skewed to basic and acidic residues; that stretch reads TESDATEERNREKAKE. The tract at residues 517-584 is disordered; the sequence is TESDATEERN…TIKGKGKSKV (68 aa). Positions 562–584 are enriched in basic residues; sequence KKKKKAKKTRFTHTIKGKGKSKV.

It belongs to the WD repeat DDB2/WDR76 family. Component of the UV-DDB complex, which is composed of DDB1 and DDB2. As to expression, expressed in proliferating tissues such as shoot apical meristem (SAM), root tips and young leaves. Not detected in mature leaves.

Its subcellular location is the nucleus. Required for DNA repair. Binds to DDB1 to form the UV-damaged DNA-binding protein complex (the UV-DDB complex). The UV-DDB complex may recognize UV-induced DNA damage and recruit proteins of the nucleotide excision repair pathway (the NER pathway) to initiate DNA repair. May function as the substrate recognition module for a DCX (DDB1-CUL4-X-box) E3 ubiquitin-protein ligase complex. The sequence is that of DNA damage-binding protein 2 from Oryza sativa subsp. japonica (Rice).